A 353-amino-acid chain; its full sequence is Rhodopsin (353 aa).

The Extracellular portion of the chain corresponds to 1 to 36 (MNGTEGDNFYVPFSNKTGLARSPYEYPQYYLAEPWK). N-linked (GlcNAc...) asparagine glycans are attached at residues Asn2 and Asn15. A helical membrane pass occupies residues 37 to 61 (YSALAAYMFFLILVGFPVNFLTLFV). Residues 62 to 73 (TVQHKKLRTPLN) are Cytoplasmic-facing. A helical membrane pass occupies residues 74 to 96 (YILLNLAMANLFMVLFGFTVTMY). The Extracellular portion of the chain corresponds to 97–110 (TSMNGYFVFGPTMC). Cys110 and Cys187 are joined by a disulfide. A helical transmembrane segment spans residues 111-133 (SIEGFFATLGGEVALWSLVVLAI). The 'Ionic lock' involved in activated form stabilization signature appears at 134–136 (ERY). Residues 134–152 (ERYIVICKPMGNFRFGNTH) lie on the Cytoplasmic side of the membrane. A helical membrane pass occupies residues 153–173 (AIMGVAFTWIMALACAAPPLV). The Extracellular segment spans residues 174–202 (GWSRYIPEGMQCSCGPDYYTLNPNFNNES). A helical transmembrane segment spans residues 203 to 224 (YVVYMFVVHFLVPFVIIFFCYG). At 225-252 (RLLCTVKEAAAAQQESASTQKAEKEVTR) the chain is on the cytoplasmic side. Residues 253 to 274 (MVVLMVIGFLVCWVPYASVAFY) form a helical membrane-spanning segment. Topologically, residues 275-286 (IFTHQGSDFGAT) are extracellular. A helical transmembrane segment spans residues 287-308 (FMTLPAFFAKSSALYNPVIYIL). Lys296 bears the N6-(retinylidene)lysine mark. The Cytoplasmic portion of the chain corresponds to 309–353 (MNKQFRNCMITTLCCGKNPLGDDESGASTSKTEVSSVSTSPVSPA). A disordered region spans residues 330 to 353 (DDESGASTSKTEVSSVSTSPVSPA). Residues 336–353 (STSKTEVSSVSTSPVSPA) are compositionally biased toward low complexity.

Belongs to the G-protein coupled receptor 1 family. Opsin subfamily. In terms of processing, phosphorylated on some or all of the serine and threonine residues present in the C-terminal region. Contains one covalently linked retinal chromophore. Short photoreceptor cells.

The protein localises to the membrane. It localises to the cell projection. The protein resides in the cilium. It is found in the photoreceptor outer segment. Photoreceptor required for image-forming vision at low light intensity. While most salt water fish species use retinal as chromophore, most freshwater fish use 3-dehydroretinal, or a mixture of retinal and 3-dehydroretinal. Light-induced isomerization of 11-cis to all-trans retinal triggers a conformational change that activates signaling via G-proteins. Subsequent receptor phosphorylation mediates displacement of the bound G-protein alpha subunit by arrestin and terminates signaling. The sequence is that of Rhodopsin (RHO) from Lethenteron camtschaticum (Japanese lamprey).